Here is a 1152-residue protein sequence, read N- to C-terminus: Nardilysin (1152 aa).

The signal sequence occupies residues 1–20; sequence MLRKVTVAAVCATRRKLCEA. Disordered stretches follow at residues 81–108 and 133–208; these read LGAD…KSPS and MEGK…KKTT. A phosphoserine mark is found at S86, S94, and S96. Over residues 141–198 the composition is skewed to acidic residues; sequence TDDEEEEEVEEEEEDDDEDSGAEIEDDDEEGFDDEDEFDDEHDDDLDTEDNELEELEE. Position 234 (H234) interacts with Zn(2+). The Proton acceptor role is filled by E237. Zn(2+) is bound by residues H238 and E315.

The protein belongs to the peptidase M16 family. Interacts with BACE1 and NRG1. It depends on Zn(2+) as a cofactor.

Its subcellular location is the mitochondrion. It localises to the cell projection. The protein localises to the dendrite. The enzyme catalyses Hydrolysis of polypeptides, preferably at -Xaa-|-Arg-Lys-, and less commonly at -Arg-|-Arg-Xaa-, in which Xaa is not Arg or Lys.. Its function is as follows. Cleaves peptide substrates on the N-terminus of arginine residues in dibasic pairs. Is a critical activator of BACE1- and ADAM17-mediated pro-neuregulin ectodomain shedding, involved in the positive regulation of axonal maturation and myelination. Required for proper functioning of 2-oxoglutarate dehydrogenase (OGDH). This Pongo abelii (Sumatran orangutan) protein is Nardilysin.